We begin with the raw amino-acid sequence, 580 residues long: Potassium-transporting ATPase potassium-binding subunit (580 aa).

The next 10 helical transmembrane spans lie at 3-23 (ASGALQPALYLAVLIGLSVPL), 65-85 (DYAFAVLAFNLAGLLVLYALQ), 136-156 (GLGVQNFVSAATGMAVLVALI), 179-199 (LYILLPLSLLLAVLLVSQGVV), 263-283 (LSNFLEMLAILLIPAALCHTF), 293-313 (GWAVLAAMTAIFAVLLVACVA), 399-419 (GLYGMLMFVVIAVFVAGLMVG), 436-456 (MASLVVLFPAITVLVGTAIAV), 504-524 (AIGVAMLVGRYAVIVPVLALA), and 546-566 (LFVGLLTGTVLLVGALTFVPA).

The protein belongs to the KdpA family. As to quaternary structure, the system is composed of three essential subunits: KdpA, KdpB and KdpC.

Its subcellular location is the cell inner membrane. Its function is as follows. Part of the high-affinity ATP-driven potassium transport (or Kdp) system, which catalyzes the hydrolysis of ATP coupled with the electrogenic transport of potassium into the cytoplasm. This subunit binds the periplasmic potassium ions and delivers the ions to the membrane domain of KdpB through an intramembrane tunnel. This chain is Potassium-transporting ATPase potassium-binding subunit, found in Sorangium cellulosum (strain So ce56) (Polyangium cellulosum (strain So ce56)).